Here is a 224-residue protein sequence, read N- to C-terminus: LexA repressor (224 aa).

Positions 38–58 form a DNA-binding region, H-T-H motif; it reads IREIGDAVGLTSTSSVAHQLR. Positions 71 to 82 are enriched in basic and acidic residues; that stretch reads NRPRAVDVRGID. The tract at residues 71–96 is disordered; it reads NRPRAVDVRGIDDAGTPSATTDVIGS. Catalysis depends on for autocatalytic cleavage activity residues serine 148 and lysine 185.

Belongs to the peptidase S24 family. Homodimer.

The enzyme catalyses Hydrolysis of Ala-|-Gly bond in repressor LexA.. Represses a number of genes involved in the response to DNA damage (SOS response), including recA and lexA. In the presence of single-stranded DNA, RecA interacts with LexA causing an autocatalytic cleavage which disrupts the DNA-binding part of LexA, leading to derepression of the SOS regulon and eventually DNA repair. In Mycobacteroides abscessus (strain ATCC 19977 / DSM 44196 / CCUG 20993 / CIP 104536 / JCM 13569 / NCTC 13031 / TMC 1543 / L948) (Mycobacterium abscessus), this protein is LexA repressor.